Consider the following 354-residue polypeptide: NADH-quinone oxidoreductase subunit H (354 aa).

A run of 8 helical transmembrane segments spans residues Ile-22–Leu-42, Tyr-91–Phe-111, Leu-124–Ala-144, Val-162–Leu-182, Leu-203–Val-223, Gly-250–Met-270, Ile-291–Ile-311, and Leu-326–Ile-346.

This sequence belongs to the complex I subunit 1 family. NDH-1 is composed of 14 different subunits. Subunits NuoA, H, J, K, L, M, N constitute the membrane sector of the complex.

The protein localises to the cell inner membrane. It catalyses the reaction a quinone + NADH + 5 H(+)(in) = a quinol + NAD(+) + 4 H(+)(out). Its function is as follows. NDH-1 shuttles electrons from NADH, via FMN and iron-sulfur (Fe-S) centers, to quinones in the respiratory chain. The immediate electron acceptor for the enzyme in this species is believed to be ubiquinone. Couples the redox reaction to proton translocation (for every two electrons transferred, four hydrogen ions are translocated across the cytoplasmic membrane), and thus conserves the redox energy in a proton gradient. This subunit may bind ubiquinone. This Cupriavidus metallidurans (strain ATCC 43123 / DSM 2839 / NBRC 102507 / CH34) (Ralstonia metallidurans) protein is NADH-quinone oxidoreductase subunit H.